The sequence spans 311 residues: D-allose-binding periplasmic protein (311 aa).

The N-terminal stretch at 1–23 (MNKYLKYFSGTLVGLMLSTSAFA) is a signal peptide.

The protein belongs to the bacterial solute-binding protein 2 family.

Its subcellular location is the periplasm. Functionally, part of the binding-protein-dependent transport system AlsBAC for D-allose. This chain is D-allose-binding periplasmic protein (alsB), found in Escherichia coli (strain K12).